The sequence spans 119 residues: Large ribosomal subunit protein bL20 (119 aa).

This sequence belongs to the bacterial ribosomal protein bL20 family.

In terms of biological role, binds directly to 23S ribosomal RNA and is necessary for the in vitro assembly process of the 50S ribosomal subunit. It is not involved in the protein synthesizing functions of that subunit. The polypeptide is Large ribosomal subunit protein bL20 (Acidithiobacillus ferrooxidans (strain ATCC 23270 / DSM 14882 / CIP 104768 / NCIMB 8455) (Ferrobacillus ferrooxidans (strain ATCC 23270))).